We begin with the raw amino-acid sequence, 284 residues long: Ribosomal RNA small subunit methyltransferase A (284 aa).

Residues Asn-12, Leu-14, Gly-38, Glu-59, Asp-81, and Asn-106 each contribute to the S-adenosyl-L-methionine site.

This sequence belongs to the class I-like SAM-binding methyltransferase superfamily. rRNA adenine N(6)-methyltransferase family. RsmA subfamily.

It is found in the cytoplasm. It catalyses the reaction adenosine(1518)/adenosine(1519) in 16S rRNA + 4 S-adenosyl-L-methionine = N(6)-dimethyladenosine(1518)/N(6)-dimethyladenosine(1519) in 16S rRNA + 4 S-adenosyl-L-homocysteine + 4 H(+). Its function is as follows. Specifically dimethylates two adjacent adenosines (A1518 and A1519) in the loop of a conserved hairpin near the 3'-end of 16S rRNA in the 30S particle. May play a critical role in biogenesis of 30S subunits. The protein is Ribosomal RNA small subunit methyltransferase A of Phytoplasma australiense.